Consider the following 128-residue polypeptide: Holo-[acyl-carrier-protein] synthase (128 aa).

Residues Asp-7 and Glu-55 each coordinate Mg(2+).

The protein belongs to the P-Pant transferase superfamily. AcpS family. The cofactor is Mg(2+).

The protein resides in the cytoplasm. It carries out the reaction apo-[ACP] + CoA = holo-[ACP] + adenosine 3',5'-bisphosphate + H(+). In terms of biological role, transfers the 4'-phosphopantetheine moiety from coenzyme A to a Ser of acyl-carrier-protein. The chain is Holo-[acyl-carrier-protein] synthase from Moorella thermoacetica (strain ATCC 39073 / JCM 9320).